Consider the following 359-residue polypeptide: Glucose 1-dehydrogenase (359 aa).

Position 39 (Cys39) interacts with Zn(2+). Thr41 is a substrate binding site. 2 residues coordinate Zn(2+): His64 and Glu65. Residues Glu116 and Glu152 each coordinate substrate. Glu152 lines the Zn(2+) pocket. 183 to 186 (AGPI) lines the NADP(+) pocket.

The protein belongs to the zinc-containing alcohol dehydrogenase family. Glucose 1-dehydrogenase subfamily. Requires Zn(2+) as cofactor.

The catalysed reaction is D-glucose + NAD(+) = D-glucono-1,5-lactone + NADH + H(+). It catalyses the reaction D-glucose + NADP(+) = D-glucono-1,5-lactone + NADPH + H(+). Functionally, catalyzes the NAD(P)(+)-dependent oxidation of D-glucose to D-gluconate via gluconolactone. Can utilize both NAD(+) and NADP(+) as electron acceptor. Is involved in the degradation of glucose through a non-phosphorylative variant of the Entner-Doudoroff pathway. This is Glucose 1-dehydrogenase from Methanocella arvoryzae (strain DSM 22066 / NBRC 105507 / MRE50).